A 152-amino-acid chain; its full sequence is Small ribosomal subunit protein uS15 (152 aa).

Residues 1–16 are compositionally biased toward basic residues; it reads MARIHARRRGKSGSKR. The disordered stretch occupies residues 1-21; sequence MARIHARRRGKSGSKRIYRDS.

It belongs to the universal ribosomal protein uS15 family. As to quaternary structure, part of the 30S ribosomal subunit.

The polypeptide is Small ribosomal subunit protein uS15 (Archaeoglobus fulgidus (strain ATCC 49558 / DSM 4304 / JCM 9628 / NBRC 100126 / VC-16)).